Consider the following 218-residue polypeptide: tRNA (cytidine(56)-2'-O)-methyltransferase (218 aa).

S-adenosyl-L-methionine-binding positions include Leu81, Gly106–Val110, and Ile124–Glu131. Positions Lys170–Thr218 are disordered. Residues Asp200–Thr218 show a composition bias toward basic and acidic residues.

The protein belongs to the aTrm56 family. Homodimer.

The protein localises to the cytoplasm. It carries out the reaction cytidine(56) in tRNA + S-adenosyl-L-methionine = 2'-O-methylcytidine(56) in tRNA + S-adenosyl-L-homocysteine + H(+). Specifically catalyzes the AdoMet-dependent 2'-O-ribose methylation of cytidine at position 56 in tRNAs. In Ignicoccus hospitalis (strain KIN4/I / DSM 18386 / JCM 14125), this protein is tRNA (cytidine(56)-2'-O)-methyltransferase.